Reading from the N-terminus, the 3130-residue chain is DNA polymerase zeta catalytic subunit (3130 aa).

Disordered regions lie at residues 263-295 (AIWEDEKQRRRNRNETSQMSQPESQDHRFVPAT), 425-457 (GYRGERNRMPSPCRSFGNNKYPQNSDDEENEPQ), 487-510 (LCRNTHRSSTEDDDSSSGEEMEWS), 524-548 (LDGTADENSDNPLNNENSRTHSSVI), 697-728 (PNENTLGKNSFNFSDLNHSKNKVSSEGNEKGN), and 817-871 (VTYK…EKDN). Basic and acidic residues predominate over residues 286-295 (SQDHRFVPAT). Positions 497–509 (EDDDSSSGEEMEW) are enriched in acidic residues. Polar residues-rich tracts occupy residues 533–548 (DNPLNNENSRTHSSVI) and 699–728 (ENTLGKNSFNFSDLNHSKNKVSSEGNEKGN). Positions 828–838 (SRLKLNKRKLA) are enriched in basic residues. A compositionally biased stretch (low complexity) spans 842–854 (ETSTKSSETGSTK). Residues 855–866 (DNFIQNNPCNSN) show a composition bias toward polar residues. S1030 carries the post-translational modification Phosphoserine. Disordered regions lie at residues 1035–1095 (YPIY…YNAE), 1162–1231 (SRIG…DEKI), and 1537–1600 (RQQK…KLLK). A Phosphothreonine modification is found at T1041. Composition is skewed to basic residues over residues 1043-1061 (KKSHRRKSKHKSAKKKTGK) and 1166-1179 (KTSRARAQIKKSKA). A compositionally biased stretch (basic and acidic residues) spans 1213-1231 (KTNEKGTSRKHTTLKDEKI). Residues 1540 to 1565 (KAQNANTTQDPLSNKHQPNKNISGSL) are compositionally biased toward polar residues. Residues 1570–1589 (ANKRTRSVTSPRKPRTPRST) are compositionally biased toward basic residues. Residues 1590–1600 (KQKEKIPKLLK) are compositionally biased toward basic and acidic residues. Position 1724 is a phosphoserine (S1724). Disordered stretches follow at residues 1845–1882 (NDMLTPTPDSSPRSTSSPSQSKNGSFTPRTANILKPLM), 1962–1984 (NPRPGSPLRSGQGVVNKGSSNSP), 2017–2050 (ERSKKLPKTKPTGVVKSAENFSSSVNPDDKPVVP), 2080–2150 (PTTG…SPVE), and 2216–2236 (APGLSPLSTEPKTQKLSNKKG). The interval 1847-1898 (MLTPTPDSSPRSTSSPSQSKNGSFTPRTANILKPLMSPPSREEIMATLLDHD) is mediates interaction with MAD2L2. The segment covering 1849 to 1865 (TPTPDSSPRSTSSPSQS) has biased composition (low complexity). The residue at position 1967 (S1967) is a Phosphoserine. The segment covering 2080–2092 (PTTGCSQTASESQ) has biased composition (polar residues). Low complexity predominate over residues 2113-2122 (YYISYSSPDS). A compositionally biased stretch (polar residues) spans 2221–2236 (PLSTEPKTQKLSNKKG). C3042, C3045, C3054, and C3057 together coordinate Zn(2+). Residues 3042–3057 (CPVCDDLTQHGICSKC) form a CysA-type zinc finger. Residues C3086, C3089, C3099, and C3104 each coordinate [4Fe-4S] cluster. The CysB motif motif lies at 3086-3104 (CKNCTGCFDRHIPCVSLNC).

It belongs to the DNA polymerase type-B family. Heterodimer with MAD2L2. This dimer forms the minimal DNA polymerase zeta complex (Pol-zeta2), with REV3L bearing DNA polymerase catalytic activity, although its activity is very low in this context. Component of the tetrameric Pol-zeta complex (Pol-zeta4), which consists of REV3L, MAD2L2, POLD2 and POLD3; Pol-zeta4 is the fully active form of DNA polymerase zeta. [4Fe-4S] cluster is required as a cofactor. Ubiquitously expressed.

It localises to the nucleus. The enzyme catalyses DNA(n) + a 2'-deoxyribonucleoside 5'-triphosphate = DNA(n+1) + diphosphate. Catalytic subunit of the DNA polymerase zeta complex, an error-prone polymerase specialized in translesion DNA synthesis (TLS). Lacks an intrinsic 3'-5' exonuclease activity and thus has no proofreading function. The protein is DNA polymerase zeta catalytic subunit (REV3L) of Homo sapiens (Human).